A 182-amino-acid chain; its full sequence is Biotin transporter BioY2 (182 aa).

5 helical membrane passes run 12–32, 54–74, 78–98, 111–131, and 150–170; these read IALG…IGIV, FFAI…FTGG, IAVL…MGTL, IPAF…GTLW, and PFVF…LALI.

This sequence belongs to the BioY family. As to quaternary structure, in E.coli forms a stable energy-coupling factor (ECF) transporter complex composed of 2 membrane-embedded substrate-binding protein (S component), 2 ATP-binding proteins (A and A' components) and 2 transmembrane proteins (T component), probably with a stoichiometry of 2:1:1:2. May be able to interact with more than 1 S component at a time.

Its subcellular location is the cell membrane. Its function is as follows. Probably a biotin-binding protein that interacts with the energy-coupling factor (ECF) ABC-transporter complex. Unlike classic ABC transporters this ECF transporter provides the energy necessary to transport a number of different substrates. The substrates themselves are bound by transmembrane, not extracytoplasmic soluble proteins. The protein is Biotin transporter BioY2 (bioY2) of Lactococcus lactis subsp. cremoris (strain MG1363).